The primary structure comprises 342 residues: Nucleoid-associated protein Sbal223_1817 (342 aa).

It belongs to the YejK family.

The protein resides in the cytoplasm. The protein localises to the nucleoid. This chain is Nucleoid-associated protein Sbal223_1817, found in Shewanella baltica (strain OS223).